A 210-amino-acid polypeptide reads, in one-letter code: ATP-dependent Clp protease proteolytic subunit (210 aa).

The active-site Nucleophile is S107. The active site involves H132.

Belongs to the peptidase S14 family. In terms of assembly, fourteen ClpP subunits assemble into 2 heptameric rings which stack back to back to give a disk-like structure with a central cavity, resembling the structure of eukaryotic proteasomes.

It localises to the cytoplasm. The catalysed reaction is Hydrolysis of proteins to small peptides in the presence of ATP and magnesium. alpha-casein is the usual test substrate. In the absence of ATP, only oligopeptides shorter than five residues are hydrolyzed (such as succinyl-Leu-Tyr-|-NHMec, and Leu-Tyr-Leu-|-Tyr-Trp, in which cleavage of the -Tyr-|-Leu- and -Tyr-|-Trp bonds also occurs).. Cleaves peptides in various proteins in a process that requires ATP hydrolysis. Has a chymotrypsin-like activity. Plays a major role in the degradation of misfolded proteins. This chain is ATP-dependent Clp protease proteolytic subunit, found in Ruegeria sp. (strain TM1040) (Silicibacter sp.).